The sequence spans 212 residues: External core antigen (212 aa).

The first 19 residues, 1-19, serve as a signal peptide directing secretion; it reads MQLFHLCLIIFCSCPTVQA. The HBEAG stretch occupies residues 25 to 27; the sequence is GWL. The tract at residues 165–212 is disordered; the sequence is NAPILSTLPETTVVRQRGRAPRRRTPSPRRRRSQSPRRRRSQSPASQC. The span at 180–205 shows a compositional bias: basic residues; the sequence is QRGRAPRRRTPSPRRRRSQSPRRRRS. One copy of the 1; half-length repeat lies at 184–190; the sequence is APRRRTP. Positions 184–206 are 3 X 8 AA repeats of S-P-R-R-R-R-S-Q; sequence APRRRTPSPRRRRSQSPRRRRSQ. The propeptide occupies 184-212; it reads APRRRTPSPRRRRSQSPRRRRSQSPASQC. Tandem repeats lie at residues 191 to 198 and 199 to 206.

The protein belongs to the orthohepadnavirus precore antigen family. In terms of assembly, homodimerizes. Phosphorylated. Post-translationally, cleaved by host furin.

Its subcellular location is the secreted. It is found in the host nucleus. Its function is as follows. May regulate immune response to the intracellular capsid in acting as a T-cell tolerogen, by having an immunoregulatory effect which prevents destruction of infected cells by cytotoxic T-cells. This immune regulation may predispose to chronicity during perinatal infections and prevent severe liver injury during adult infections. In Hepatitis B virus genotype H subtype adw4 (isolate Nicaragua/2928Nic/1997) (HBV-H), this protein is External core antigen.